Consider the following 357-residue polypeptide: NADH-quinone oxidoreductase subunit H (357 aa).

The next 8 membrane-spanning stretches (helical) occupy residues 20–40 (WLVL…ILCV), 92–112 (ILFV…WAVV), 127–147 (LLYV…AGWA), 165–185 (VSYE…SGSL), 206–226 (FLSW…ISAV), 254–274 (MAFA…SCMA), 294–314 (IPGW…FVWF), and 329–349 (LGWK…AIWM).

Belongs to the complex I subunit 1 family. NDH-1 is composed of 14 different subunits. Subunits NuoA, H, J, K, L, M, N constitute the membrane sector of the complex.

The protein localises to the cell inner membrane. The catalysed reaction is a quinone + NADH + 5 H(+)(in) = a quinol + NAD(+) + 4 H(+)(out). Its function is as follows. NDH-1 shuttles electrons from NADH, via FMN and iron-sulfur (Fe-S) centers, to quinones in the respiratory chain. The immediate electron acceptor for the enzyme in this species is believed to be ubiquinone. Couples the redox reaction to proton translocation (for every two electrons transferred, four hydrogen ions are translocated across the cytoplasmic membrane), and thus conserves the redox energy in a proton gradient. This subunit may bind ubiquinone. The polypeptide is NADH-quinone oxidoreductase subunit H (Bordetella petrii (strain ATCC BAA-461 / DSM 12804 / CCUG 43448)).